Here is a 1127-residue protein sequence, read N- to C-terminus: Caprin-2 (1127 aa).

A disordered region spans residues Tyr67–Leu108. Positions Arg99–Leu108 are enriched in polar residues. Coiled coils occupy residues Leu129 to Leu156 and Ala194 to Thr216. Disordered regions lie at residues Asn382–Val614, Asp642–Val753, and Gln922–Val975. Basic and acidic residues-rich tracts occupy residues Lys402–Val432 and Glu440–Lys464. 2 stretches are compositionally biased toward polar residues: residues Pro512–Thr531 and Thr544–Pro567. The span at Leu588–Lys597 shows a compositional bias: basic and acidic residues. Composition is skewed to polar residues over residues Lys665–Thr714 and Gln741–Val753. Phosphoserine is present on residues Ser948 and Ser949. Polar residues predominate over residues Thr956–Met970. A C1q domain is found at Pro993–Asp1127. Ca(2+) is bound by residues Asp1078 and Glu1084.

It belongs to the caprin family. In terms of assembly, homotrimer; via C1q domain. Found in a complex with LRP6, CCNY and CDK14 during G2/M stage; CAPRIN2 functions as a scaffold for the complex by binding to CCNY via its N terminus and to CDK14 via its C terminus. Interacts with LRP5. Interacts with LRP6. In terms of tissue distribution, detected in all tissues tested with highest levels of expression in brain and spleen.

The protein resides in the cytoplasm. The protein localises to the mitochondrion. It localises to the cell membrane. Promotes phosphorylation of the Wnt coreceptor LRP6, leading to increased activity of the canonical Wnt signaling pathway. Facilitates constitutive LRP6 phosphorylation by CDK14/CCNY during G2/M stage of the cell cycle, which may potentiate cells for Wnt signaling. May regulate the transport and translation of mRNAs, modulating for instance the expression of proteins involved in synaptic plasticity in neurons. Involved in regulation of growth as erythroblasts shift from a highly proliferative state towards their terminal phase of differentiation. May be involved in apoptosis. The protein is Caprin-2 of Homo sapiens (Human).